Here is a 103-residue protein sequence, read N- to C-terminus: Small ribosomal subunit protein uS10 (103 aa).

It belongs to the universal ribosomal protein uS10 family. In terms of assembly, part of the 30S ribosomal subunit.

In terms of biological role, involved in the binding of tRNA to the ribosomes. The protein is Small ribosomal subunit protein uS10 of Psychrobacter arcticus (strain DSM 17307 / VKM B-2377 / 273-4).